The sequence spans 418 residues: Serine hydroxymethyltransferase (418 aa).

Residues Leu-121 and 125–127 contribute to the (6S)-5,6,7,8-tetrahydrofolate site; that span reads GHL. Lys-230 carries the N6-(pyridoxal phosphate)lysine modification. A (6S)-5,6,7,8-tetrahydrofolate-binding site is contributed by 356-358; it reads SPF.

Belongs to the SHMT family. As to quaternary structure, homodimer. It depends on pyridoxal 5'-phosphate as a cofactor.

Its subcellular location is the cytoplasm. It catalyses the reaction (6R)-5,10-methylene-5,6,7,8-tetrahydrofolate + glycine + H2O = (6S)-5,6,7,8-tetrahydrofolate + L-serine. The protein operates within one-carbon metabolism; tetrahydrofolate interconversion. It functions in the pathway amino-acid biosynthesis; glycine biosynthesis; glycine from L-serine: step 1/1. Its function is as follows. Catalyzes the reversible interconversion of serine and glycine with tetrahydrofolate (THF) serving as the one-carbon carrier. This reaction serves as the major source of one-carbon groups required for the biosynthesis of purines, thymidylate, methionine, and other important biomolecules. Also exhibits THF-independent aldolase activity toward beta-hydroxyamino acids, producing glycine and aldehydes, via a retro-aldol mechanism. The protein is Serine hydroxymethyltransferase of Shewanella halifaxensis (strain HAW-EB4).